A 434-amino-acid polypeptide reads, in one-letter code: Trigger factor (434 aa).

The PPIase FKBP-type domain occupies 160 to 245 (GDKAKINFVG…LNEVQAANLP (86 aa)).

It belongs to the FKBP-type PPIase family. Tig subfamily.

The protein resides in the cytoplasm. The catalysed reaction is [protein]-peptidylproline (omega=180) = [protein]-peptidylproline (omega=0). In terms of biological role, involved in protein export. Acts as a chaperone by maintaining the newly synthesized protein in an open conformation. Functions as a peptidyl-prolyl cis-trans isomerase. The chain is Trigger factor from Shewanella woodyi (strain ATCC 51908 / MS32).